Here is a 179-residue protein sequence, read N- to C-terminus: Large ribosomal subunit protein uL5 (179 aa).

This sequence belongs to the universal ribosomal protein uL5 family. As to quaternary structure, part of the 50S ribosomal subunit; part of the 5S rRNA/L5/L18/L25 subcomplex. Contacts the 5S rRNA and the P site tRNA. Forms a bridge to the 30S subunit in the 70S ribosome.

In terms of biological role, this is one of the proteins that bind and probably mediate the attachment of the 5S RNA into the large ribosomal subunit, where it forms part of the central protuberance. In the 70S ribosome it contacts protein S13 of the 30S subunit (bridge B1b), connecting the 2 subunits; this bridge is implicated in subunit movement. Contacts the P site tRNA; the 5S rRNA and some of its associated proteins might help stabilize positioning of ribosome-bound tRNAs. This chain is Large ribosomal subunit protein uL5, found in Francisella philomiragia subsp. philomiragia (strain ATCC 25017 / CCUG 19701 / FSC 153 / O#319-036).